A 4687-amino-acid polypeptide reads, in one-letter code: Plectin (4687 aa).

The tract at residues 1 to 1473 is globular 1; it reads MVAGMLMPLD…SELTTLTSQY (1473 aa). Arginine 21 carries the phosphoserine modification. Valine 26 is modified (phosphotyrosine). The interval 111 to 158 is disordered; that stretch reads RRRSPHVQTMQGPLGCPPKRGPLPAEDPAREERQVYRRKEREEGAPET. Positions 137-154 are enriched in basic and acidic residues; it reads DPAREERQVYRRKEREEG. The tract at residues 181–406 is actin-binding; sequence DERDRVQKKT…YVSSLYDAMP (226 aa). Calponin-homology (CH) domains lie at 185 to 288 and 301 to 406; these read RVQK…LHFK and MTAK…DAMP. The Spectrin 1 repeat unit spans residues 648–722; the sequence is LQSTQRRPEL…ERARNDESQL (75 aa). Serine 723 is modified (phosphoserine). Spectrin repeat units lie at residues 743–827 and 840–933; these read KLLN…REDH and LQTQ…AIVQ. Phosphothreonine is present on threonine 818. One can recognise an SH3 domain in the interval 944 to 1001; it reads RGHVPLLAVCDYKQVEVTVHKGDQCQLVGPAQPFHWKVLSSSGSEAAVPSVCFLVPPP. Serine 1050 is subject to Phosphoserine. The Spectrin 4 repeat unit spans residues 1318–1418; that stretch reads RERVTQLLER…QKFAKQYINA (101 aa). The residue at position 1438 (serine 1438) is a Phosphoserine. Coiled coils occupy residues 1472 to 1692 and 1724 to 2760; these read QYIK…ERWL and SFAE…TSQA. The central fibrous rod domain stretch occupies residues 1474 to 2758; that stretch reads IKFISETLRR…LAHSEEIATS (1285 aa). The tract at residues 1623 to 1647 is disordered; the sequence is EEAEAQKRQAQEEAERLRRQVQDES. Serine 1724 is modified (phosphoserine). Lysine 1728 bears the N6-acetyllysine mark. Disordered stretches follow at residues 1741 to 1764, 1796 to 1846, 2096 to 2139, 2164 to 2188, and 2218 to 2307; these read VTVTQLREEAERRAQQQAEAERAR, SLAQ…GTAQ, EDTM…AEEE, LRERAEQESARQLQLAQEAAQKRLQ, and RLRS…DAEM. Basic and acidic residues-rich tracts occupy residues 1801-1839, 2096-2111, and 2119-2131; these read DAEKQKEEAEREARRRGKAEEQAVRQRELAEQELEKQRQ, EDTMRSKELAEQEAAR, and EEQRRREAEERVQ. Residues 2173-2182 show a composition bias toward low complexity; sequence ARQLQLAQEA. The span at 2218–2261 shows a compositional bias: basic and acidic residues; the sequence is RLRSEAEAARRAAEEAEEAREQAEREAAQSRKQVEEAERLKQSA. Residues 2262-2275 show a composition bias toward low complexity; the sequence is EEQAQAQAQAQAAA. The span at 2276 to 2291 shows a compositional bias: basic and acidic residues; that stretch reads EKLRKEAEQEAARRAQ. Phosphoserine is present on serine 2634. Residue lysine 2639 is modified to N6-acetyllysine. Residues 2671–2710 form a disordered region; the sequence is QEEQQRQQQQMEQEKQELVASMEEARRRQREAEEGVRRKQ. Basic and acidic residues predominate over residues 2682-2710; it reads EQEKQELVASMEEARRRQREAEEGVRRKQ. Positions 2759–4687 are globular 2; the sequence is QAAATKALPN…SLGGPESAVA (1929 aa). Serine 2777 is modified (phosphoserine). Phosphotyrosine is present on tyrosine 2784. 6 Plectin repeats span residues 2791–2828, 2829–2866, 2867–2904, 2905–2942, 2943–2980, and 2984–3018; these read QKVPAQQLQEAGILSMEELQRLTQGHTTVAELTQREDV, RHYLKGGSSIAGLLLKPTNEKLSVYTALQRQLLSPGTA, LILLEAQAASGFLLDPVRNRRLTVNEAVKEGVVGPELH, HKLLSAERAVTGYKDPYTGEQISLFQAMKKDLIVRDHG, IRLLEAQIATGGIIDPVHSHRVPVDVAYQRGYFDEEMN, and ADPSDDTKGFFDPNTHENLTYLQLLERCVEDPETG. The residue at position 2805 (serine 2805) is a Phosphoserine. Residue threonine 2889 is modified to Phosphothreonine. Phosphotyrosine is present on tyrosine 3036. 2 positions are modified to N6-acetyllysine: lysine 3056 and lysine 3094. Plectin repeat units follow at residues 3119–3156, 3157–3194, 3195–3232, 3233–3270, 3271–3308, and 3311–3346; these read ALVPAAELLDSGVISHEVYQQLQRGERSVREVAEADEV, RQALRGTSVIAGVWLEEAGQKLSIYEALRRDLLQPEVA, VALLEAQAGTGHIIDPATSARLTVDEAVRAGLVGPEMH, EKLLSAEKAVTGYRDPYSGQSVSLFQALKKGLIPREQG, LRLLDAQLSTGGIVDPSKSHRVPLDVAYARGYLDKETN, and LTSPRDDARVYLDPSTREPVTYSQLQQRCRSDQLTG. Tyrosine 3365 is subject to Phosphotyrosine. Lysine 3423 carries the N6-acetyllysine modification. Plectin repeat units lie at residues 3488 to 3525, 3526 to 3563, 3564 to 3601, 3602 to 3639, and 3643 to 3677; these read RTLLQGSGCLAGIYLEDSKEKVTIYEAMRRGLLRASTA, TLLLEAQAATGFLVDPVRNQRLYVHEAVKAGVVGPELH, EKLLSAEKAVTGYKDPYSGSTISLFQAMKKGLVLRDHA, IRLLEAQIATGGIIDPVHSHRLPVDVAYQRGYFDEEMN, and ADPSDDTKGFFDPNTHENLTYLQLLERCVEDPETG. The residue at position 3583 (serine 3583) is a Phosphoserine. At threonine 3788 the chain carries Phosphothreonine. Phosphotyrosine is present on tyrosine 3793. Plectin repeat units follow at residues 3823 to 3860, 3861 to 3898, 3899 to 3936, 3937 to 3974, and 3978 to 4011; these read WRYLYGTGSVAGVYLPGSRQTLTIYQALKKGLLSAEVA, RLLLEAQAATGFLLDPVKGERLTVDEAVRKGLVGPELH, DRLLSAERAVTGYRDPYTEQPISLFQAMKKELIPAEEA, LRLLDAQLATGGIVDPRLGFHLPLEVAYQRGYLNKDTH, and SEPSEVRSYVDPSTDERLSYTQLLKRCRRDDNSG. Residue threonine 4033 is modified to Phosphothreonine. Residue serine 4057 is modified to Phosphoserine. Plectin repeat units follow at residues 4066-4103, 4104-4141, 4142-4179, 4180-4217, 4221-4255, and 4268-4308; these read QKFLEGTSCIAGVFVDATKERLSVYQAMKKGIIRPGTA, FELLEAQAATGYVIDPIKGLKLTVEEAVRMGIVGPEFK, DKLLSAERAVTGYKDPYSGKLISLFQAMKKGLILKDHG, IRLLEAQIATGGIIDPEESHRLPVEVAYKRGLFDEEMN, TDPSDDTKGFFDPNTEENLTYLQLMERCITDPQTG, and RKTS…HQTY. Residues 4253–4303 are binding to intermediate filaments; sequence QTGLCLLPLKEKKRERKTSSKSSVRKRRVVIVDPETGKEMSVYEAYRKGLI. Phosphoserine is present on residues serine 4385, serine 4387, serine 4388, serine 4389, serine 4392, serine 4393, serine 4394, and serine 4395. Tyrosine 4396 bears the Phosphotyrosine mark. Phosphoserine is present on residues serine 4399 and serine 4409. 5 Plectin repeats span residues 4411–4448, 4449–4486, 4487–4524, 4525–4562, and 4563–4600; these read SDPTEETGPVAGILDTETLEKVSITEAMHRNLVDNITG, QRLLEAQACTGGIIDPSTGERFPVTEAVNKGLVDKIMV, DRINLAQKAFCGFEDPRTKTKMSAAQALKKGWLYYEAG, QRFLEVQYLTGGLIEPDTPGRVSLDEALQRGTVDARTA, and QKLRDVSAYSKYLTCPKTKLKISYKDALDRSMVEEGTG. Threonine 4414 carries the post-translational modification Phosphothreonine. The residue at position 4542 (threonine 4542) is a Phosphothreonine; by CDK1. A phosphoserine mark is found at serine 4610 and serine 4616. Low complexity predominate over residues 4614 to 4674; that stretch reads YYSPYSVSGS…SGYGRRYASG (61 aa). The segment at 4614 to 4687 is disordered; the sequence is YYSPYSVSGS…SLGGPESAVA (74 aa). Position 4618 is a phosphotyrosine (tyrosine 4618). Phosphoserine occurs at positions 4619, 4621, and 4625. At threonine 4626 the chain carries Phosphothreonine. The interval 4628 to 4643 is 4 X 4 AA tandem repeats of G-S-R-X; sequence GSRTGSRTGSRAGSRR. The residue at position 4629 (serine 4629) is a Phosphoserine. 2 positions are modified to omega-N-methylarginine: arginine 4630 and arginine 4643. 2 positions are modified to phosphoserine: serine 4645 and serine 4678.

The protein belongs to the plakin or cytolinker family. In terms of assembly, homodimer or homotetramer. Interacts (via actin-binding domain) with SYNE3. Interacts (via calponin-homology (CH) 1 domain) with VIM (via rod region). Interacts (via N-terminus) with DST isoform 2 (via N-terminus). Interacts with FER. Interacts with TOR1A. Interacts with ANK3. Identified in complexes that contain VIM, EZR, AHNAK, BFSP1, BFSP2, ANK2, PLEC, PRX and spectrin. Phosphorylated by CDK1; regulates dissociation from intermediate filaments during mitosis. Isoform 2 is phosphorylated on Ser-21 and Tyr-26. In terms of tissue distribution, widely expressed with highest expression in skeletal muscle and lowest in thymus.

Its subcellular location is the cytoplasm. It localises to the cytoskeleton. The protein resides in the cell junction. The protein localises to the hemidesmosome. It is found in the cell projection. Its subcellular location is the podosome. In terms of biological role, interlinks intermediate filaments with microtubules and microfilaments and anchors intermediate filaments to desmosomes or hemidesmosomes. May be involved not only in the cross-linking and stabilization of cytoskeletal intermediate filaments network, but also in the regulation of their dynamics. The polypeptide is Plectin (Plec) (Rattus norvegicus (Rat)).